A 292-amino-acid polypeptide reads, in one-letter code: DCN1-like protein 4 (292 aa).

The disordered stretch occupies residues 43-83 (HQTGSLRSCSSSDCFNKVMPPRKKRRPASGDDLSAKKSRHD). Positions 45 to 56 (TGSLRSCSSSDC) are enriched in polar residues. Lys95 participates in a covalent cross-link: Glycyl lysine isopeptide (Lys-Gly) (interchain with G-Cter in SUMO2). In terms of domain architecture, DCUN1 spans 101 to 287 (FSSKRCLEWF…LLDEFVEWYK (187 aa)).

Interacts (via the DCUN1 domain) with the unneddylated cullins: interacts with CUL1, CUL2, CUL3, CUL4A, CUL4B and CUL5; these interactions promote the cullin neddylation and the identity of the cullin dictates the affinity of the interaction. Interacts with RBX1 and RNF7. Interacts with CAND1; this interaction is bridged by cullins such as CUL3 and strongly inhibits the neddylation of CUL3. These CAND-cullin-DCNL complexes can only be neddylated in the presence of a substrate adapter. Interacts (via DCUN1 domain) with UBE2M (N-terminally acetylated form) and probably with UBE2F (N-terminally acetylated form).

The protein resides in the nucleus. In terms of biological role, contributes to the neddylation of all cullins by transferring NEDD8 from N-terminally acetylated NEDD8-conjugating E2s enzyme to different cullin C-terminal domain-RBX complexes which are necessary for the activation of cullin-RING E3 ubiquitin ligases (CRLs). The sequence is that of DCN1-like protein 4 from Homo sapiens (Human).